A 224-amino-acid chain; its full sequence is Deoxyribose-phosphate aldolase (224 aa).

The active-site Proton donor/acceptor is the aspartate 92. Lysine 155 functions as the Schiff-base intermediate with acetaldehyde in the catalytic mechanism. Residue lysine 184 is the Proton donor/acceptor of the active site.

It belongs to the DeoC/FbaB aldolase family. DeoC type 1 subfamily.

It is found in the cytoplasm. It carries out the reaction 2-deoxy-D-ribose 5-phosphate = D-glyceraldehyde 3-phosphate + acetaldehyde. It functions in the pathway carbohydrate degradation; 2-deoxy-D-ribose 1-phosphate degradation; D-glyceraldehyde 3-phosphate and acetaldehyde from 2-deoxy-alpha-D-ribose 1-phosphate: step 2/2. Functionally, catalyzes a reversible aldol reaction between acetaldehyde and D-glyceraldehyde 3-phosphate to generate 2-deoxy-D-ribose 5-phosphate. This Clostridium perfringens (strain 13 / Type A) protein is Deoxyribose-phosphate aldolase.